The following is a 249-amino-acid chain: Transmembrane protein 51 (249 aa).

A run of 2 helical transmembrane segments spans residues 17 to 37 (IGLG…VPGF) and 64 to 84 (VAYV…CLSI). Disordered regions lie at residues 95 to 126 (ELAR…SRYY), 161 to 199 (TGLD…PLKV), and 213 to 249 (RITL…RPPD). A compositionally biased stretch (polar residues) spans 99-108 (IQQQAGTVPH). Phosphoserine occurs at positions 109, 114, 178, and 188. Polar residues predominate over residues 167-178 (TPTSTRAETETS). The span at 190 to 199 (LAKRLKPLKV) shows a compositional bias: basic residues. The span at 220 to 234 (NVPPPSIEPLTPPPL) shows a compositional bias: pro residues.

The protein localises to the membrane. In Mus musculus (Mouse), this protein is Transmembrane protein 51 (Tmem51).